A 224-amino-acid chain; its full sequence is Cytochrome c oxidase subunit 2 (224 aa).

Residues 1 to 26 (MSTWGQMNLMDPASPIQIEMMLFHDH) lie on the Mitochondrial intermembrane side of the membrane. The helical transmembrane segment at 27-48 (AMAILIGIFTLVSCLGVKLCFN) threads the bilayer. Residues 49–62 (TLSTRTMHEAQLLE) are Mitochondrial matrix-facing. A helical transmembrane segment spans residues 63-82 (TLWTILPAFLLVWLALPSLR). The Mitochondrial intermembrane portion of the chain corresponds to 83–224 (LLYLLDEQSS…DVKDFINMCN (142 aa)). Cu cation is bound by residues His-161, Cys-196, Glu-198, Cys-200, His-204, and Met-207. Mg(2+) is bound at residue Glu-198.

The protein belongs to the cytochrome c oxidase subunit 2 family. In terms of assembly, component of the cytochrome c oxidase (complex IV, CIV), a multisubunit enzyme composed of a catalytic core of 3 subunits and several supernumerary subunits. The complex exists as a monomer or a dimer and forms supercomplexes (SCs) in the inner mitochondrial membrane with ubiquinol-cytochrome c oxidoreductase (cytochrome b-c1 complex, complex III, CIII). Cu cation is required as a cofactor.

Its subcellular location is the mitochondrion inner membrane. It catalyses the reaction 4 Fe(II)-[cytochrome c] + O2 + 8 H(+)(in) = 4 Fe(III)-[cytochrome c] + 2 H2O + 4 H(+)(out). Component of the cytochrome c oxidase, the last enzyme in the mitochondrial electron transport chain which drives oxidative phosphorylation. The respiratory chain contains 3 multisubunit complexes succinate dehydrogenase (complex II, CII), ubiquinol-cytochrome c oxidoreductase (cytochrome b-c1 complex, complex III, CIII) and cytochrome c oxidase (complex IV, CIV), that cooperate to transfer electrons derived from NADH and succinate to molecular oxygen, creating an electrochemical gradient over the inner membrane that drives transmembrane transport and the ATP synthase. Cytochrome c oxidase is the component of the respiratory chain that catalyzes the reduction of oxygen to water. Electrons originating from reduced cytochrome c in the intermembrane space (IMS) are transferred via the dinuclear copper A center (CU(A)) of subunit 2 and heme A of subunit 1 to the active site in subunit 1, a binuclear center (BNC) formed by heme A3 and copper B (CU(B)). The BNC reduces molecular oxygen to 2 water molecules using 4 electrons from cytochrome c in the IMS and 4 protons from the mitochondrial matrix. This is Cytochrome c oxidase subunit 2 (COII) from Albinaria turrita (Door snail).